Reading from the N-terminus, the 411-residue chain is Arginine deiminase (411 aa).

The Amidino-cysteine intermediate role is filled by cysteine 401.

It belongs to the arginine deiminase family.

The protein localises to the cytoplasm. It carries out the reaction L-arginine + H2O = L-citrulline + NH4(+). Its pathway is amino-acid degradation; L-arginine degradation via ADI pathway; carbamoyl phosphate from L-arginine: step 1/2. The sequence is that of Arginine deiminase from Streptococcus pyogenes serotype M2 (strain MGAS10270).